The primary structure comprises 228 residues: 2-phospho-L-lactate guanylyltransferase (228 aa).

This sequence belongs to the CofC family. Homodimer.

The catalysed reaction is (2S)-2-phospholactate + GTP + H(+) = (2S)-lactyl-2-diphospho-5'-guanosine + diphosphate. It functions in the pathway cofactor biosynthesis; coenzyme F420 biosynthesis. Functionally, guanylyltransferase that catalyzes the activation of (2S)-2-phospholactate (2-PL) as (2S)-lactyl-2-diphospho-5'-guanosine, via the condensation of 2-PL with GTP. It is involved in the biosynthesis of coenzyme F420, a hydride carrier cofactor. The polypeptide is 2-phospho-L-lactate guanylyltransferase (Methanosphaera stadtmanae (strain ATCC 43021 / DSM 3091 / JCM 11832 / MCB-3)).